The sequence spans 234 residues: Opacity protein V28 (234 aa).

Residue Ala-1 is a signal peptide.

Belongs to the opacity porin family.

Its subcellular location is the cell outer membrane. Functionally, implicated in a number of adherence functions. OPA proteins are implicated in pathogenesis and are subject to phase variation. The protein is Opacity protein V28 of Neisseria gonorrhoeae.